Consider the following 216-residue polypeptide: 1-Cys peroxiredoxin PER1 (216 aa).

Positions 4–159 constitute a Thioredoxin domain; sequence ITLGDTVPNL…VLRALDSLLM (156 aa). Residue C46 is the Cysteine sulfenic acid (-SOH) intermediate of the active site. A Bipartite nuclear localization signal motif is present at residues 191-214; sequence KKMFPQGFKTADLPSKKGYLRHTE.

It belongs to the peroxiredoxin family. Prx6 subfamily. As to expression, predominantly expressed in seed. Expressed in endosperm, embryo and aleurone cells. Also detected in young seedlings, abscission zones, stem branching points.

The protein localises to the nucleus. It localises to the cytoplasm. The catalysed reaction is a hydroperoxide + [thioredoxin]-dithiol = an alcohol + [thioredoxin]-disulfide + H2O. Thiol-specific peroxidase that catalyzes the reduction of hydrogen peroxide and organic hydroperoxides to water and alcohols, respectively. Seems to contribute to the inhibition of germination during stress. The sequence is that of 1-Cys peroxiredoxin PER1 (PER1) from Arabidopsis thaliana (Mouse-ear cress).